The primary structure comprises 139 residues: D-ribose pyranase (139 aa).

His20 acts as the Proton donor in catalysis. Substrate contacts are provided by residues Asp28, His106, and 128 to 130; that span reads YAN.

It belongs to the RbsD / FucU family. RbsD subfamily. In terms of assembly, homodecamer.

It is found in the cytoplasm. The catalysed reaction is beta-D-ribopyranose = beta-D-ribofuranose. The protein operates within carbohydrate metabolism; D-ribose degradation; D-ribose 5-phosphate from beta-D-ribopyranose: step 1/2. Its function is as follows. Catalyzes the interconversion of beta-pyran and beta-furan forms of D-ribose. The protein is D-ribose pyranase of Vibrio cholerae serotype O1 (strain ATCC 39541 / Classical Ogawa 395 / O395).